A 667-amino-acid polypeptide reads, in one-letter code: DNA ligase (667 aa).

NAD(+)-binding positions include 34–38 (DYEFD), 83–84 (SL), and Glu117. Lys119 serves as the catalytic N6-AMP-lysine intermediate. Residues Arg140, Glu176, Lys289, and Lys313 each coordinate NAD(+). Cys407, Cys410, Cys425, and Cys431 together coordinate Zn(2+). Positions 591–667 (QVNRNFEGMS…ISEDEFMGMM (77 aa)) constitute a BRCT domain.

The protein belongs to the NAD-dependent DNA ligase family. LigA subfamily. Mg(2+) serves as cofactor. The cofactor is Mn(2+).

The catalysed reaction is NAD(+) + (deoxyribonucleotide)n-3'-hydroxyl + 5'-phospho-(deoxyribonucleotide)m = (deoxyribonucleotide)n+m + AMP + beta-nicotinamide D-nucleotide.. DNA ligase that catalyzes the formation of phosphodiester linkages between 5'-phosphoryl and 3'-hydroxyl groups in double-stranded DNA using NAD as a coenzyme and as the energy source for the reaction. It is essential for DNA replication and repair of damaged DNA. The sequence is that of DNA ligase from Chlorobium chlorochromatii (strain CaD3).